The sequence spans 309 residues: MEMO1 family protein C4H3.04c (309 aa).

This sequence belongs to the MEMO1 family.

This Schizosaccharomyces pombe (strain 972 / ATCC 24843) (Fission yeast) protein is MEMO1 family protein C4H3.04c.